The following is a 297-amino-acid chain: Halorhodopsin (297 aa).

The segment at 1-31 (MRSRTYHDQSVCGPYGSQRTDCDRDTDAGSD) is disordered. The Extracellular portion of the chain corresponds to 1-45 (MRSRTYHDQSVCGPYGSQRTDCDRDTDAGSDTDVHGAQVATQIRT). A helical membrane pass occupies residues 46–71 (DTLLHSSLWVNIALAGLSILVFLYMA). At 72 to 77 (RTVRAN) the chain is on the cytoplasmic side. The helical transmembrane segment at 78–101 (RARLIVGATLMIPLVSLSSYLGLV) threads the bilayer. Topologically, residues 102–125 (TGLTAGPIEMPAAHALAGEDVLSQ) are extracellular. Residues 126–147 (WGRYLTWTLSTPMILLALGWLA) traverse the membrane as a helical segment. At 148 to 150 (EVD) the chain is on the cytoplasmic side. The chain crosses the membrane as a helical span at residues 151–174 (TADLFVVIAADIGMCLTGLAAALT). At 175 to 177 (TSS) the chain is on the extracellular side. Residues 178-200 (YAFRWAFYLVSTAFFVVVLYALL) form a helical membrane-spanning segment. Residues 201–212 (AKWPTNAEAAGT) lie on the Cytoplasmic side of the membrane. A helical membrane pass occupies residues 213 to 236 (GDIFGTLRWLTVILWLGYPILWAL). The Extracellular segment spans residues 237–246 (GVEGFALVDS). A helical transmembrane segment spans residues 247–275 (VGLTSWGYSLLDIGAKYLFAALLLRWVAN). Lysine 262 carries the N6-(retinylidene)lysine modification. The Cytoplasmic segment spans residues 276-297 (NERTIAVGQRSGRGAIGDPVED).

The protein belongs to the archaeal/bacterial/fungal opsin family.

It localises to the cell membrane. Functionally, light-driven chloride pump. This is Halorhodopsin (hop) from Haloterrigena sp. (strain arg-4).